The chain runs to 1335 residues: Probable serine/threonine-protein kinase ndrC (1335 aa).

Disordered stretches follow at residues 1–70 (MSRK…KKGS), 85–158 (VDTH…LIPS), 276–447 (LPPP…SPLN), and 462–603 (TTTT…NNNK). Polar residues predominate over residues 8–17 (NRSSSSNSIE). The segment covering 27 to 41 (SNISNSSNINCNNSS) has biased composition (low complexity). Positions 55-70 (RSKHSSPIHSLKKKGS) are enriched in basic residues. A compositionally biased stretch (low complexity) spans 89–117 (SSSNSNNNSSSNNNNNNNNHNINSSSESS). The segment covering 118-132 (TPTTPRSSFTPQVTM) has biased composition (polar residues). Residues 133-153 (NSNQSSGNNSPQLSSRSSSQS) are compositionally biased toward low complexity. Pro residues predominate over residues 276–288 (LPPPSQQQLPPPQ). 6 stretches are compositionally biased toward low complexity: residues 289–331 (SHQQ…TPQS), 345–368 (NQQQ…SPNK), 382–396 (SPSP…SPSS), 412–424 (PTPL…SPSS), 437–447 (PSSFSGGSPLN), and 462–484 (TTTT…TTIS). The segment covering 485–497 (NPNYTQNLPTTPL) has biased composition (polar residues). A compositionally biased stretch (low complexity) spans 498–507 (SNSSSNNNNN). Positions 508-528 (GSFITLQDTTNNKSIINNNRE) are enriched in polar residues. A compositionally biased stretch (low complexity) spans 540–566 (SSGSSNTTSSTTNTTTPSSSSLTTSSG). The span at 567–581 (KESRDRDSKDKEKDL) shows a compositional bias: basic and acidic residues. The segment covering 586 to 602 (NNNNNNNNNNNNNNNNN) has biased composition (low complexity). Residues 586-613 (NNNNNNNNNNNNNNNNNKVEKEKENYCK) adopt a coiled-coil conformation. In terms of domain architecture, Protein kinase spans 718–1019 (FKILTQIGKG…KQDFKNHPFF (302 aa)). Residues 724–732 (IGKGGFGQV) and Lys-747 each bind ATP. Asp-840 serves as the catalytic Proton acceptor. In terms of domain architecture, AGC-kinase C-terminal spans 1020–1106 (KNHNWDEIVN…RKSSALSLSM (87 aa)). Positions 1239–1284 (SQSQPSLANQLQSSSSSPSPSLQSQSQSPSLQSSSKSTPNLSSSLL) are enriched in low complexity. The interval 1239–1313 (SQSQPSLANQ…IKKENESEEI (75 aa)) is disordered. Residues 1287–1313 (PVKEELEYKNQTENEVEIKKENESEEI) are compositionally biased toward basic and acidic residues. Residues 1289–1325 (KEELEYKNQTENEVEIKKENESEEIQSLRDQLKEIII) adopt a coiled-coil conformation.

It belongs to the protein kinase superfamily. AGC Ser/Thr protein kinase family.

The catalysed reaction is L-seryl-[protein] + ATP = O-phospho-L-seryl-[protein] + ADP + H(+). It catalyses the reaction L-threonyl-[protein] + ATP = O-phospho-L-threonyl-[protein] + ADP + H(+). This is Probable serine/threonine-protein kinase ndrC (ndrC) from Dictyostelium discoideum (Social amoeba).